The following is a 363-amino-acid chain: Trichothecene biosynthesis protein 14 (363 aa).

The protein belongs to the TRI14 family.

Its function is as follows. Part of the gene cluster that mediates the production of the antimicrobial trichothecene harzianum A (HA) that plays a role in Botrytis cinerea antagonistic activity and plant defense priming. The biosynthesis of harzianum A begins with the cyclization of farnesyl diphosphate to trichodiene and is catalyzed by the trichodiene synthase TRI5. Trichodiene undergoes a series of oxygenations catalyzed by the cytochrome P450 monooxygenase TRI4. TRI4 controls the addition of 3 oxygens at C-2, C-11, and the C-12, C-13-epoxide to form the intermediate isotrichodiol. Isotrichodiol then undergoes a non-enzymatic isomerization and cyclization to form 12,13-epoxytrichothec-9-ene (EPT) which is further converted to trichodermol by the cytochrome P450 monooxygenase TRI11 via C-4 hydroxylation. The last step of HA synthesis is esterification of an octatriendioyl moiety to the C-4 oxygen of trichodermol. The octatriendioyl moiety is probably produced by the polyketide synthase TRI17 and the esterification performed by the trichothecene O-acetyltransferase TRI3. This Trichoderma arundinaceum protein is Trichothecene biosynthesis protein 14.